The primary structure comprises 460 residues: Cysteine--tRNA ligase (460 aa).

Residue Cys28 coordinates Zn(2+). Positions 30–40 (VTIYDLCHIGH) match the 'HIGH' region motif. 3 residues coordinate Zn(2+): Cys209, His234, and Glu238. Residues 266–270 (KMSKS) carry the 'KMSKS' region motif. Lys269 provides a ligand contact to ATP.

The protein belongs to the class-I aminoacyl-tRNA synthetase family. Monomer. Requires Zn(2+) as cofactor.

The protein resides in the cytoplasm. It carries out the reaction tRNA(Cys) + L-cysteine + ATP = L-cysteinyl-tRNA(Cys) + AMP + diphosphate. The polypeptide is Cysteine--tRNA ligase (Vibrio parahaemolyticus serotype O3:K6 (strain RIMD 2210633)).